We begin with the raw amino-acid sequence, 312 residues long: Olfactory receptor 7D4 (312 aa).

The Extracellular portion of the chain corresponds to 1-25 (MEAENLTELSKFLLLGLSDDPELQP). Asn5 carries N-linked (GlcNAc...) asparagine glycosylation. Residues 26 to 46 (VLFGLFLSMYLVTVLGNLLII) traverse the membrane as a helical segment. The Cytoplasmic portion of the chain corresponds to 47-54 (LAVSSDSH). Residues 55–75 (LHTPMYFFLSNLSFVDICFIS) form a helical membrane-spanning segment. Over 76–99 (TTVPKMLVSIQARSKDISYMGCLT) the chain is Extracellular. The cysteines at positions 97 and 189 are disulfide-linked. Residues 100-120 (QVYFLMMFAGMDTFLLAVMAY) form a helical membrane-spanning segment. The Cytoplasmic segment spans residues 121 to 139 (DRFVAICHPLHYTVIMNPC). Residues 140–160 (LCGLLVLASWFIIFWFSLVHI) traverse the membrane as a helical segment. The Extracellular portion of the chain corresponds to 161-197 (LLMKRLTFSTGTEIPHFFCEPAQVLKVACSNTLLNNI). The helical transmembrane segment at 198-217 (VLYVATALLGVFPVAGILFS) threads the bilayer. The Cytoplasmic segment spans residues 218–237 (YSQIVSSLMGMSSTKGKYKA). Residues 238 to 258 (FSTCGSHLCVVSLFYGTGLGV) form a helical membrane-spanning segment. Topologically, residues 259-271 (YLSSAVTHSSQSS) are extracellular. The chain crosses the membrane as a helical span at residues 272–292 (STASVMYAMVTPMLNPFIYSL). Topologically, residues 293–312 (RNKDVKGALERLLSRADSCP) are cytoplasmic.

It belongs to the G-protein coupled receptor 1 family. Nasal olfactory epithelium.

Its subcellular location is the cell membrane. Odorant receptor. Selectively activated by androstenone and the related odorous steroid androstadienone. This is Olfactory receptor 7D4 (OR7D4) from Homo sapiens (Human).